The chain runs to 318 residues: Thioredoxin reductase (318 aa).

36–43 (TGLQQGGQ) provides a ligand contact to FAD. A disulfide bridge links Cys136 with Cys139. 286–295 (DVMDHNYRQA) is a binding site for FAD.

This sequence belongs to the class-II pyridine nucleotide-disulfide oxidoreductase family. As to quaternary structure, homodimer. FAD is required as a cofactor.

It localises to the cytoplasm. The catalysed reaction is [thioredoxin]-dithiol + NADP(+) = [thioredoxin]-disulfide + NADPH + H(+). This chain is Thioredoxin reductase (trxB), found in Haemophilus influenzae (strain ATCC 51907 / DSM 11121 / KW20 / Rd).